We begin with the raw amino-acid sequence, 312 residues long: Ribosomal RNA small subunit methyltransferase H (312 aa).

Residues 32–34 (AGH), D52, F79, D100, and Q107 contribute to the S-adenosyl-L-methionine site.

The protein belongs to the methyltransferase superfamily. RsmH family.

It is found in the cytoplasm. The catalysed reaction is cytidine(1402) in 16S rRNA + S-adenosyl-L-methionine = N(4)-methylcytidine(1402) in 16S rRNA + S-adenosyl-L-homocysteine + H(+). In terms of biological role, specifically methylates the N4 position of cytidine in position 1402 (C1402) of 16S rRNA. This Listeria monocytogenes serotype 4b (strain CLIP80459) protein is Ribosomal RNA small subunit methyltransferase H.